The primary structure comprises 751 residues: Semaphorin-3C (751 aa).

Residues 1–21 form the signal peptide; sequence MAFQAVCILVGVFVCSTYVKG. Residues 28 to 511 form the Sema domain; the sequence is RVYLTFDELR…SNEGLAQVSL (484 aa). A glycan (N-linked (GlcNAc...) asparagine) is linked at Asn-81. Residues Cys-101 and Cys-112 are joined by a disulfide bond. Asn-123 carries N-linked (GlcNAc...) asparagine glycosylation. 3 cysteine pairs are disulfide-bonded: Cys-130-Cys-139, Cys-266-Cys-378, and Cys-290-Cys-338. N-linked (GlcNAc...) asparagine glycosylation is present at Asn-268. A glycan (N-linked (GlcNAc...) asparagine) is linked at Asn-465. An intrachain disulfide couples Cys-514 to Cys-532. Residues 571 to 655 form the Ig-like C2-type domain; it reads AYRNAAEIVQ…TENSFKQTIA (85 aa). N-linked (GlcNAc...) asparagine glycans are attached at residues Asn-585 and Asn-586. An intrachain disulfide couples Cys-592 to Cys-643. The span at 712–731 shows a compositional bias: basic and acidic residues; that stretch reads TRQQHQQGEESQKMRGDYGK. The segment at 712–751 is disordered; sequence TRQQHQQGEESQKMRGDYGKLKALINSRKSRNRRNQLPES.

Belongs to the semaphorin family. In terms of assembly, interacts with PLXND1.

The protein localises to the secreted. Binds to plexin family members and plays an important role in the regulation of developmental processes. Required for normal cardiovascular development during embryogenesis. Functions as attractant for growing axons, and thereby plays an important role in axon growth and axon guidance. The polypeptide is Semaphorin-3C (SEMA3C) (Bos taurus (Bovine)).